Consider the following 795-residue polypeptide: Phenylalanine--tRNA ligase beta subunit (795 aa).

A tRNA-binding domain is found at 39-148 (AGSFNGVVVG…ADAPLGTDIR (110 aa)). Positions 401–476 (PKRATITLRR…RVYGYNNIPD (76 aa)) constitute a B5 domain. Positions 454, 460, 463, and 464 each coordinate Mg(2+). The region spanning 701 to 794 (SRFPANRRDI…LKERFQASLR (94 aa)) is the FDX-ACB domain.

This sequence belongs to the phenylalanyl-tRNA synthetase beta subunit family. Type 1 subfamily. Tetramer of two alpha and two beta subunits. Mg(2+) is required as a cofactor.

The protein resides in the cytoplasm. The catalysed reaction is tRNA(Phe) + L-phenylalanine + ATP = L-phenylalanyl-tRNA(Phe) + AMP + diphosphate + H(+). The protein is Phenylalanine--tRNA ligase beta subunit of Salmonella choleraesuis (strain SC-B67).